The following is a 664-amino-acid chain: DNA ligase (664 aa).

Residues 32–36 (DKEYD) and 80–81 (SL) each bind NAD(+). Lys-122 acts as the N6-AMP-lysine intermediate in catalysis. Residues Arg-144, Glu-178, and Lys-314 each coordinate NAD(+). Zn(2+) is bound by residues Cys-407, Cys-410, Cys-423, and Cys-429. The 78-residue stretch at 587–664 (IDENPFMDKT…NEEEFSNKIK (78 aa)) folds into the BRCT domain.

The protein belongs to the NAD-dependent DNA ligase family. LigA subfamily. Requires Mg(2+) as cofactor. Mn(2+) is required as a cofactor.

It carries out the reaction NAD(+) + (deoxyribonucleotide)n-3'-hydroxyl + 5'-phospho-(deoxyribonucleotide)m = (deoxyribonucleotide)n+m + AMP + beta-nicotinamide D-nucleotide.. Functionally, DNA ligase that catalyzes the formation of phosphodiester linkages between 5'-phosphoryl and 3'-hydroxyl groups in double-stranded DNA using NAD as a coenzyme and as the energy source for the reaction. It is essential for DNA replication and repair of damaged DNA. The polypeptide is DNA ligase (Clostridium botulinum (strain Okra / Type B1)).